A 251-amino-acid polypeptide reads, in one-letter code: MNLNSIPAFQDNYIWVLTNDEGRCVIVDPGEAAPVLKAIAAHKWMPEAIFLTHHHYDHVGGVKELLQHFPQMTVYGPAETQDKGATHLVGDGDTIRVLGEKFTLFATPGHTLGHVCYFSHPYLFCGDTLFSGGCGRLFEGTPSQMYQSLMKINSLPDDTLICSAHEYTLANIKFALSILPHDSFINEYYRKVKELRVKKQMTLPVILKNERKINLFLRTEDIDLINEINKETILQQPEARFAWLRSKKDTF.

Histidine 53, histidine 55, aspartate 57, histidine 58, histidine 110, aspartate 127, and histidine 165 together coordinate Zn(2+).

Belongs to the metallo-beta-lactamase superfamily. Glyoxalase II family. As to quaternary structure, monomer. Zn(2+) serves as cofactor.

The enzyme catalyses an S-(2-hydroxyacyl)glutathione + H2O = a 2-hydroxy carboxylate + glutathione + H(+). It participates in secondary metabolite metabolism; methylglyoxal degradation; (R)-lactate from methylglyoxal: step 2/2. In terms of biological role, thiolesterase that catalyzes the hydrolysis of S-D-lactoyl-glutathione to form glutathione and D-lactic acid. This is Hydroxyacylglutathione hydrolase from Salmonella typhi.